The sequence spans 640 residues: Threonine--tRNA ligase (640 aa).

A TGS domain is found at 1-61 (MPTITLPDGS…ENDASLQIIT (61 aa)). The interval 242–533 (DHRKIGKRLG…LIEHYEGAFP (292 aa)) is catalytic. 3 residues coordinate Zn(2+): Cys-333, His-384, and His-510.

The protein belongs to the class-II aminoacyl-tRNA synthetase family. In terms of assembly, homodimer. Zn(2+) is required as a cofactor.

Its subcellular location is the cytoplasm. The catalysed reaction is tRNA(Thr) + L-threonine + ATP = L-threonyl-tRNA(Thr) + AMP + diphosphate + H(+). Functionally, catalyzes the attachment of threonine to tRNA(Thr) in a two-step reaction: L-threonine is first activated by ATP to form Thr-AMP and then transferred to the acceptor end of tRNA(Thr). Also edits incorrectly charged L-seryl-tRNA(Thr). This Pseudomonas syringae pv. tomato (strain ATCC BAA-871 / DC3000) protein is Threonine--tRNA ligase.